We begin with the raw amino-acid sequence, 182 residues long: Ribosome maturation factor RimM (182 aa).

A PRC barrel domain is found at Glu-102–Phe-182.

Belongs to the RimM family. As to quaternary structure, binds ribosomal protein uS19.

It is found in the cytoplasm. In terms of biological role, an accessory protein needed during the final step in the assembly of 30S ribosomal subunit, possibly for assembly of the head region. Essential for efficient processing of 16S rRNA. May be needed both before and after RbfA during the maturation of 16S rRNA. It has affinity for free ribosomal 30S subunits but not for 70S ribosomes. In Yersinia pseudotuberculosis serotype IB (strain PB1/+), this protein is Ribosome maturation factor RimM.